The sequence spans 1706 residues: Bifunctional hemolysin/adenylate cyclase (1706 aa).

Residues 1 to 399 (MQQSHQAGYA…RRPSLGAVER (399 aa)) form an a, catalytic region. 349-356 (AYGVAGKS) is a binding site for ATP. A disordered region spans residues 383–405 (VPASPGLRRPSLGAVERQDSGYD). The interval 400–912 (QDSGYDSLDG…LKHSIKLDVI (513 aa)) is b, Ala/Gly-rich. The interval 500 to 698 (LSAAVFGLGE…SVVGAPVAVV (199 aa)) is required for interaction with CyaC. N6-palmitoyl lysine attachment occurs at residues lysine 860 and lysine 983. The segment at 913–1656 (GGDGDDVVLA…RDADHRVEII (744 aa)) is c. Hemolysin-type calcium-binding repeat units follow at residues 1014–1031 (IGGA…DNFL), 1032–1049 (AGGS…NDTL), 1050–1067 (VGGE…DDVF), 1155–1172 (WGHD…DDIL), 1173–1190 (RGGL…NDIF), 1279–1296 (MGQG…DDLL), 1297–1314 (FGGD…NDTL), 1315–1332 (YGGL…NDWF), 1335–1352 (TQAR…VDTV), 1411–1428 (TGDA…ADVL), 1429–1446 (AGGE…DDQL), 1447–1464 (SGDA…DDWF), 1468–1484 (AANA…RDTV), 1537–1554 (IGDA…NDVL), 1555–1572 (SGGA…SDLL), 1573–1590 (SGDA…DDTY), and 1603–1620 (ESGG…ADQL). Residues 1657 to 1706 (HAANQAVDQAGIEKLVEAMAQYPDPGAAAAAPPAARVPDTLMQSLAVNWR) are d, Asp/Gly-rich.

It in the N-terminal section; belongs to the adenylyl cyclase class-2 family. This sequence in the C-terminal section; belongs to the RTX prokaryotic toxin family. Post-translationally, released in a processed form. Palmitoylated at Lys-860 and Lys-983 by CyaC. The toxin only becomes active when modified in position Lys-983: palmitoylation is required for efficient membrane insertion and pore formation of the acylated Hemolysin chain.

It is found in the secreted. Its subcellular location is the host cell membrane. The catalysed reaction is ATP = 3',5'-cyclic AMP + diphosphate. Its activity is regulated as follows. Activated by host calmodulin. Its function is as follows. Bifunctional adenylate cyclase toxin-hemolysin that plays a crucial role in host colonization. It causes whooping cough by acting on mammalian cells by elevating cAMP-concentration and thus disrupts normal cell function. Adenylate cyclase that is activated by host intracellular calmodulin and catalyzes un-regulated conversion of ATP to cAMP, thereby impairing microbicidal functions of immune effector cells and inducing apoptosis of lung macrophages. Functionally, hemolysin that forms small cation-selective membrane channels, leading to hemolytic activity. The hemolytic activity of CyaA is weak compared with that of the HlyA of E.coli. This is Bifunctional hemolysin/adenylate cyclase (cya) from Bordetella pertussis (strain Tohama I / ATCC BAA-589 / NCTC 13251).